A 452-amino-acid polypeptide reads, in one-letter code: tRNA modification GTPase MnmE (452 aa).

3 residues coordinate (6S)-5-formyl-5,6,7,8-tetrahydrofolate: R22, E79, and K119. One can recognise a TrmE-type G domain in the interval 215-375 (GMKVVIAGRP…LRQHLKQSMG (161 aa)). N225 is a binding site for K(+). GTP-binding positions include 225-230 (NAGKSS), 244-250 (TDIAGTT), 269-272 (DTAG), and 333-336 (NKAD). S229 is a binding site for Mg(2+). K(+) is bound by residues T244, I246, and T249. T250 lines the Mg(2+) pocket. Residue K452 coordinates (6S)-5-formyl-5,6,7,8-tetrahydrofolate.

It belongs to the TRAFAC class TrmE-Era-EngA-EngB-Septin-like GTPase superfamily. TrmE GTPase family. Homodimer. Heterotetramer of two MnmE and two MnmG subunits. The cofactor is K(+).

It is found in the cytoplasm. Exhibits a very high intrinsic GTPase hydrolysis rate. Involved in the addition of a carboxymethylaminomethyl (cmnm) group at the wobble position (U34) of certain tRNAs, forming tRNA-cmnm(5)s(2)U34. The protein is tRNA modification GTPase MnmE of Histophilus somni (strain 129Pt) (Haemophilus somnus).